The sequence spans 341 residues: Methionine import ATP-binding protein MetN 1 (341 aa).

An ABC transporter domain is found at 2–241 (IKLNQIVKRY…PQHEVTKRFV (240 aa)). 38–45 (GFSGAGKS) contributes to the ATP binding site.

It belongs to the ABC transporter superfamily. Methionine importer (TC 3.A.1.24) family. The complex is composed of two ATP-binding proteins (MetN), two transmembrane proteins (MetI) and a solute-binding protein (MetQ).

The protein localises to the cell membrane. The catalysed reaction is L-methionine(out) + ATP + H2O = L-methionine(in) + ADP + phosphate + H(+). It carries out the reaction D-methionine(out) + ATP + H2O = D-methionine(in) + ADP + phosphate + H(+). In terms of biological role, part of the ABC transporter complex MetNIQ involved in methionine import. Responsible for energy coupling to the transport system. This is Methionine import ATP-binding protein MetN 1 from Staphylococcus epidermidis (strain ATCC 12228 / FDA PCI 1200).